The chain runs to 1026 residues: RecBCD enzyme subunit RecB (1026 aa).

Positions Met1 to Thr438 constitute a UvrD-like helicase ATP-binding domain. Positions Met1–His766 are DNA-binding and helicase activity, interacts with RecC. Ala21–Thr28 contributes to the ATP binding site. A nuclease activity, interacts with RecD and RecA region spans residues Ser815 to Arg1026. 3 residues coordinate Mg(2+): His854, Asp940, and Asp953. Asp953 serves as the catalytic For nuclease activity.

Belongs to the helicase family. UvrD subfamily. Heterotrimer of RecB, RecC and RecD. All subunits contribute to DNA-binding. Interacts with RecA. Mg(2+) serves as cofactor.

It catalyses the reaction Exonucleolytic cleavage (in the presence of ATP) in either 5'- to 3'- or 3'- to 5'-direction to yield 5'-phosphooligonucleotides.. The enzyme catalyses Couples ATP hydrolysis with the unwinding of duplex DNA by translocating in the 3'-5' direction.. It carries out the reaction ATP + H2O = ADP + phosphate + H(+). Functionally, a helicase/nuclease that prepares dsDNA breaks (DSB) for recombinational DNA repair. Binds to DSBs and unwinds DNA via a highly rapid and processive ATP-dependent bidirectional helicase activity. Unwinds dsDNA until it encounters a Chi (crossover hotspot instigator) sequence from the 3' direction. Cuts ssDNA a few nucleotides 3' to the Chi site. The properties and activities of the enzyme are changed at Chi. The Chi-altered holoenzyme produces a long 3'-ssDNA overhang and facilitates RecA-binding to the ssDNA for homologous DNA recombination and repair. Holoenzyme degrades any linearized DNA that is unable to undergo homologous recombination. In the holoenzyme this subunit contributes ATPase, 3'-5' helicase, exonuclease activity and loads RecA onto ssDNA. This is RecBCD enzyme subunit RecB from Chlamydia trachomatis serovar D (strain ATCC VR-885 / DSM 19411 / UW-3/Cx).